Here is a 1229-residue protein sequence, read N- to C-terminus: Alpha,alpha-trehalose-phosphate synthase [UDP-forming] 2 (1229 aa).

The tract at residues 196–233 (VSSDSEGEEAIHNVRSGTHTESESEEDPKAPRSGLATS) is disordered. The segment covering 213–225 (THTESESEEDPKA) has biased composition (basic and acidic residues).

The protein in the N-terminal section; belongs to the glycosyltransferase 20 family. In the C-terminal section; belongs to the gob-1 trehalose phosphatase family.

The catalysed reaction is D-glucose 6-phosphate + UDP-alpha-D-glucose = alpha,alpha-trehalose 6-phosphate + UDP + H(+). Catalyzes the production of trehalose from glucose-6-phosphate and UDP-alpha-D-glucose in a 2 step process. The chain is Alpha,alpha-trehalose-phosphate synthase [UDP-forming] 2 (tps-2) from Caenorhabditis elegans.